A 213-amino-acid chain; its full sequence is MAAPAVSGLSRQVRCFSTSVVRPFAKLVRPPVQVYGIEGRYATALYSAASKQNKLEQVEKELLRVAQILKEPKVAASVLNPYVKRSIKVKSLNDITAKERFSPLTTNLINLLAENGRLSNTQGVVSAFSTMMSVHRGEVPCTVTSASPLEEATLSELKTVLKSFLSQGQVLKLEAKTDPSILGGMIVRIGEKYVDMSVKTKIQKLGRAMREIV.

Residues 1-23 (MAAPAVSGLSRQVRCFSTSVVRP) constitute a mitochondrion transit peptide. Residues 5 to 23 (AVSGLSRQVRCFSTSVVRP) carry the SIFI-degron motif. An N6-acetyllysine mark is found at Lys-54, Lys-60, Lys-70, and Lys-73. At Lys-90 the chain carries N6-succinyllysine. Lys-158 and Lys-162 each carry N6-acetyllysine; alternate. An N6-succinyllysine; alternate mark is found at Lys-158 and Lys-162. An N6-acetyllysine mark is found at Lys-172, Lys-176, and Lys-192. At Lys-199 the chain carries N6-succinyllysine.

The protein belongs to the ATPase delta chain family. In terms of assembly, component of the ATP synthase complex composed at least of ATP5F1A/subunit alpha, ATP5F1B/subunit beta, ATP5MC1/subunit c (homooctomer), MT-ATP6/subunit a, MT-ATP8/subunit 8, ATP5ME/subunit e, ATP5MF/subunit f, ATP5MG/subunit g, ATP5MK/subunit k, ATP5MJ/subunit j, ATP5F1C/subunit gamma, ATP5F1D/subunit delta, ATP5F1E/subunit epsilon, ATP5PF/subunit F6, ATP5PB/subunit b, ATP5PD/subunit d, ATP5PO/subunit OSCP. ATP synthase complex consists of a soluble F(1) head domain (subunits alpha(3) and beta(3)) - the catalytic core - and a membrane F(0) domain - the membrane proton channel (subunits c, a, 8, e, f, g, k and j). These two domains are linked by a central stalk (subunits gamma, delta, and epsilon) rotating inside the F1 region and a stationary peripheral stalk (subunits F6, b, d, and OSCP). Acetylation at Lys-162 decreases ATP production. Deacetylated by SIRT3. In terms of processing, in response to mitochondrial stress, the precursor protein is ubiquitinated by the SIFI complex in the cytoplasm before mitochondrial import, leading to its degradation. Within the SIFI complex, UBR4 initiates ubiquitin chain that are further elongated or branched by KCMF1.

It is found in the mitochondrion. The protein resides in the mitochondrion inner membrane. Its function is as follows. Subunit OSCP, of the mitochondrial membrane ATP synthase complex (F(1)F(0) ATP synthase or Complex V) that produces ATP from ADP in the presence of a proton gradient across the membrane which is generated by electron transport complexes of the respiratory chain. ATP synthase complex consist of a soluble F(1) head domain - the catalytic core - and a membrane F(1) domain - the membrane proton channel. These two domains are linked by a central stalk rotating inside the F(1) region and a stationary peripheral stalk. During catalysis, ATP synthesis in the catalytic domain of F(1) is coupled via a rotary mechanism of the central stalk subunits to proton translocation. In vivo, can only synthesize ATP although its ATP hydrolase activity can be activated artificially in vitro. Part of the complex F(0) domain. Part of the complex F(0) domain and the peripheric stalk, which acts as a stator to hold the catalytic alpha(3)beta(3) subcomplex and subunit a/ATP6 static relative to the rotary elements. The protein is ATP synthase peripheral stalk subunit OSCP, mitochondrial of Homo sapiens (Human).